The chain runs to 512 residues: Ferredoxin--nitrite reductase (512 aa).

[4Fe-4S] cluster is bound by residues Cys-396, Cys-402, Cys-437, and Cys-441. Cys-441 contacts siroheme.

It belongs to the nitrite and sulfite reductase 4Fe-4S domain family.

It catalyses the reaction 6 oxidized [2Fe-2S]-[ferredoxin] + NH4(+) + 2 H2O = nitrite + 6 reduced [2Fe-2S]-[ferredoxin] + 8 H(+). The protein is Ferredoxin--nitrite reductase (nirA) of Synechococcus elongatus (strain ATCC 33912 / PCC 7942 / FACHB-805) (Anacystis nidulans R2).